Consider the following 337-residue polypeptide: Heme A synthase (337 aa).

The next 5 membrane-spanning stretches (helical) occupy residues 6-26, 87-107, 119-139, 154-174, and 192-212; these read ITKW…IGGI, FIHR…LIYF, LPYI…WYMV, LAFH…QLIK, and LIFS…GALV. Histidine 256 lines the heme pocket. 3 consecutive transmembrane segments (helical) span residues 258-278, 285-305, and 308-328; these read LGSY…LTIE, IAYF…ITLL, and VPII…SIII. Position 316 (histidine 316) interacts with heme.

This sequence belongs to the COX15/CtaA family. Type 2 subfamily. As to quaternary structure, interacts with CtaB. It depends on heme b as a cofactor.

It localises to the cell membrane. The catalysed reaction is Fe(II)-heme o + 2 A + H2O = Fe(II)-heme a + 2 AH2. It functions in the pathway porphyrin-containing compound metabolism; heme A biosynthesis; heme A from heme O: step 1/1. Catalyzes the conversion of heme O to heme A by two successive hydroxylations of the methyl group at C8. The first hydroxylation forms heme I, the second hydroxylation results in an unstable dihydroxymethyl group, which spontaneously dehydrates, resulting in the formyl group of heme A. The polypeptide is Heme A synthase (Rickettsia akari (strain Hartford)).